The primary structure comprises 810 residues: MTKWTLGYSYPIALTISLIPALTPAIVQAAPLTPPPATGILDGLCYDYVPKVEKLAPGKDANAQPVEVDADRLEAKQGGTAVYQGDVKVRQGVRKFDSDYAELDQKSRDVIAIGNIYYNDGQITVTSDKTLKSNLDTKNSELEEGKYQVHGSPVRGSADRVTMTNNNQNITLEGAQYTTCPPGQEVWTLKAGSIDIDQTEVFGEAWNASLWLYDYPVFYFPYINFPIKDERKTGLLYPGYTQSSKNGMDITQPFYWNIAPNYDATITSRFMDRRGLMEQVEFRYMPDPAHVGSLYFENLADDKQYDETPSLNEKLSDGHRYLLNARHTSLFADNAMRVSVDYTKVRDRDYNYFNDFSPKVGTQVENQLQQSLMAGYFQQNWNLNTEVRTYQILLASAQQPHELMPRINHNYYHQGNWYDLAWNTEVTRFGYNNTQASAQNLGDAYTGTRVYTAPTLTMPLIDEAGYYLDSQYKLMYTRYDQEVPDNMSSTFTKRFTPEGASGVTLDEGIITRTLPSFRLKGGMTFERNQDWFGGDANQTLEPEFQYLYVPYKDQDNIGVYDSTTMRQDYYSLFSDRRYAGLDRISDSNRVSLGVTTRVYDQAGDERIRLAVAQAFDFVAPRVKLYPSESLATNTRSPLSFEGDAKINEQWFAHAGAQYDMDQSEISSANSALEYRREKLISQLNYRFVRNANYDLSNTNQVADLNQVGMLLTTPLNDQWHLYGGYYHDLDQGVKVDRKVGLKYDSCCWSINFNLEWVNTPDNVTMRPTSERSLGIQFEMKGLGSVGTGSKGTSLDTEALPYIRPFNLRDQ.

Positions 1 to 29 (MTKWTLGYSYPIALTISLIPALTPAIVQA) are cleaved as a signal peptide.

The protein belongs to the LptD family. Component of the lipopolysaccharide transport and assembly complex. Interacts with LptE and LptA.

The protein resides in the cell outer membrane. In terms of biological role, together with LptE, is involved in the assembly of lipopolysaccharide (LPS) at the surface of the outer membrane. The sequence is that of LPS-assembly protein LptD from Aeromonas salmonicida (strain A449).